The primary structure comprises 726 residues: Catalase-peroxidase (726 aa).

The signal sequence occupies residues 1–16; it reads MDNPTDSAGKCPVAHG. Positions 1–26 are disordered; that stretch reads MDNPTDSAGKCPVAHGNTPRSRSNRD. Positions 96–218 form a cross-link, tryptophyl-tyrosyl-methioninium (Trp-Tyr) (with M-244); that stretch reads WHSAGTYRIT…LGAVQMGLIY (123 aa). The active-site Proton acceptor is the histidine 97. A cross-link (tryptophyl-tyrosyl-methioninium (Tyr-Met) (with W-96)) is located at residues 218-244; the sequence is YVNPEGPNGTPDPLASARDIRETFARM. Position 259 (histidine 259) interacts with heme b.

This sequence belongs to the peroxidase family. Peroxidase/catalase subfamily. Homodimer or homotetramer. Requires heme b as cofactor. Post-translationally, formation of the three residue Trp-Tyr-Met cross-link is important for the catalase, but not the peroxidase activity of the enzyme.

It catalyses the reaction H2O2 + AH2 = A + 2 H2O. The enzyme catalyses 2 H2O2 = O2 + 2 H2O. Its function is as follows. Bifunctional enzyme with both catalase and broad-spectrum peroxidase activity. This Rhizobium johnstonii (strain DSM 114642 / LMG 32736 / 3841) (Rhizobium leguminosarum bv. viciae) protein is Catalase-peroxidase.